Reading from the N-terminus, the 675-residue chain is Potassium-transporting ATPase ATP-binding subunit 2 (675 aa).

4 helical membrane-spanning segments follow: residues 34–54 (IMFVVEVGMVLTLILICFPDI), 65–85 (LITIFIILLITILFANFSEAF), 216–236 (IALFTLLTTLTIIFLVVIVTL), and 245–265 (LILPIAMLIALTVCLIPTTIG). Residue aspartate 304 is the 4-aspartylphosphate intermediate of the active site. ATP-binding positions include aspartate 341, glutamate 345, 372 to 379 (FTAETRMS), and lysine 390. The Mg(2+) site is built by aspartate 513 and aspartate 517. 3 consecutive transmembrane segments (helical) span residues 569–591 (ALTTFSLANDVAKYFAILPALMM), 611–631 (AIISALIFNALIIVALIPIAM), and 644–664 (IFINNMLIYGLGGLIVPFLGI).

This sequence belongs to the cation transport ATPase (P-type) (TC 3.A.3) family. Type IA subfamily. The system is composed of three essential subunits: KdpA, KdpB and KdpC.

It localises to the cell membrane. The enzyme catalyses K(+)(out) + ATP + H2O = K(+)(in) + ADP + phosphate + H(+). In terms of biological role, part of the high-affinity ATP-driven potassium transport (or Kdp) system, which catalyzes the hydrolysis of ATP coupled with the electrogenic transport of potassium into the cytoplasm. This subunit is responsible for energy coupling to the transport system and for the release of the potassium ions to the cytoplasm. The protein is Potassium-transporting ATPase ATP-binding subunit 2 of Staphylococcus aureus (strain Mu50 / ATCC 700699).